Consider the following 116-residue polypeptide: Large ribosomal subunit protein uL18 (116 aa).

Belongs to the universal ribosomal protein uL18 family. As to quaternary structure, part of the 50S ribosomal subunit; part of the 5S rRNA/L5/L18/L25 subcomplex. Contacts the 5S and 23S rRNAs.

In terms of biological role, this is one of the proteins that bind and probably mediate the attachment of the 5S RNA into the large ribosomal subunit, where it forms part of the central protuberance. The sequence is that of Large ribosomal subunit protein uL18 from Caulobacter vibrioides (strain ATCC 19089 / CIP 103742 / CB 15) (Caulobacter crescentus).